Consider the following 274-residue polypeptide: Diaminopimelate epimerase (274 aa).

Positions 11, 44, and 64 each coordinate substrate. The active-site Proton donor is C73. Residues 74–75, N157, N190, and 208–209 each bind substrate; these read GN and ER. The Proton acceptor role is filled by C217. 218–219 lines the substrate pocket; sequence GS.

It belongs to the diaminopimelate epimerase family. In terms of assembly, homodimer.

Its subcellular location is the cytoplasm. The enzyme catalyses (2S,6S)-2,6-diaminopimelate = meso-2,6-diaminopimelate. It participates in amino-acid biosynthesis; L-lysine biosynthesis via DAP pathway; DL-2,6-diaminopimelate from LL-2,6-diaminopimelate: step 1/1. Its function is as follows. Catalyzes the stereoinversion of LL-2,6-diaminopimelate (L,L-DAP) to meso-diaminopimelate (meso-DAP), a precursor of L-lysine and an essential component of the bacterial peptidoglycan. This chain is Diaminopimelate epimerase, found in Pasteurella multocida (strain Pm70).